Reading from the N-terminus, the 245-residue chain is MNRILLEVCVDDPDGLEAAVAGGADRVELCSALCAGGLTPSPGLMSAAGMPPVPVYAMIRPRAGDFVYDAADLEVMRRDIDAARAAGLAGVVLGASRADGRLDARMLTKLAGHAAGMGLTLHRAFDLVPDFAEALEIAVELGFERILTSGGAKTAPEAVEILEKLIAAASGRISIMPGSGITSNTAGTLLPRLAIAEVHSSCSTSEPANDMRLVEMGFAAPERRRTDAAKIRAMRACLDALAAKA.

It belongs to the CutC family.

The protein localises to the cytoplasm. The chain is PF03932 family protein CutC from Sinorhizobium medicae (strain WSM419) (Ensifer medicae).